Consider the following 97-residue polypeptide: Aspartyl/glutamyl-tRNA(Asn/Gln) amidotransferase subunit C (97 aa).

The protein belongs to the GatC family. In terms of assembly, heterotrimer of A, B and C subunits.

It carries out the reaction L-glutamyl-tRNA(Gln) + L-glutamine + ATP + H2O = L-glutaminyl-tRNA(Gln) + L-glutamate + ADP + phosphate + H(+). The catalysed reaction is L-aspartyl-tRNA(Asn) + L-glutamine + ATP + H2O = L-asparaginyl-tRNA(Asn) + L-glutamate + ADP + phosphate + 2 H(+). In terms of biological role, allows the formation of correctly charged Asn-tRNA(Asn) or Gln-tRNA(Gln) through the transamidation of misacylated Asp-tRNA(Asn) or Glu-tRNA(Gln) in organisms which lack either or both of asparaginyl-tRNA or glutaminyl-tRNA synthetases. The reaction takes place in the presence of glutamine and ATP through an activated phospho-Asp-tRNA(Asn) or phospho-Glu-tRNA(Gln). This chain is Aspartyl/glutamyl-tRNA(Asn/Gln) amidotransferase subunit C, found in Prochlorococcus marinus (strain MIT 9215).